A 464-amino-acid polypeptide reads, in one-letter code: Protein FAM90A20 (464 aa).

Disordered regions lie at residues 16-42 (RAQTLQKQRRAPVGPRAPPPDEEDPRL), 71-213 (ATLG…IPRP), 228-247 (PTHSSPEGSCREVPQAASKT), 254-273 (VRTQAQDKRPAVTSQPCPSA), 309-389 (RLGP…HDGA), and 418-437 (EKPGAFLAQSPHVSEKSEAP). 2 stretches are compositionally biased toward basic and acidic residues: residues 74 to 83 (GKKEGKENLK) and 97 to 114 (NKDKGEKEERPRQQDPQR). Low complexity predominate over residues 180–197 (LASLSPLRKASLSSSSSL).

This sequence belongs to the FAM90 family.

In Homo sapiens (Human), this protein is Protein FAM90A20.